The primary structure comprises 402 residues: mRNA cap guanine-N(7) methyltransferase (402 aa).

Residues 1–11 (MDHVLNPEEKV) are compositionally biased toward basic and acidic residues. The segment at 1–75 (MDHVLNPEEK…PRLEEGHGSL (75 aa)) is disordered. Over residues 35 to 50 (PKLSASEKSLPGNTKS) the composition is skewed to polar residues. Over residues 55–72 (KAAEPDSPPKRPRLEEGH) the composition is skewed to basic and acidic residues. One can recognise an mRNA cap 0 methyltransferase domain in the interval 94 to 401 (SRIFHLRNFN…IYLLFAFEKQ (308 aa)). Residue 103 to 104 (NN) coordinates mRNA. S-adenosyl-L-methionine is bound by residues lysine 107, glycine 131, aspartate 153, aspartate 187, glutamine 210, and tyrosine 215.

This sequence belongs to the class I-like SAM-binding methyltransferase superfamily. mRNA cap 0 methyltransferase family.

Its subcellular location is the nucleus. It catalyses the reaction a 5'-end (5'-triphosphoguanosine)-ribonucleoside in mRNA + S-adenosyl-L-methionine = a 5'-end (N(7)-methyl 5'-triphosphoguanosine)-ribonucleoside in mRNA + S-adenosyl-L-homocysteine. Catalytic subunit of the mRNA-capping methyltransferase RNMT:RAMAC complex that methylates the N7 position of the added guanosine to the 5'-cap structure of mRNAs. Binds RNA containing 5'-terminal GpppC. The polypeptide is mRNA cap guanine-N(7) methyltransferase (rnmt) (Xenopus laevis (African clawed frog)).